Here is a 249-residue protein sequence, read N- to C-terminus: Probable septum site-determining protein MinC (249 aa).

Residues 115-141 form a disordered region; sequence KPAQEAPAQAEPEAAAAPEPANEPAPA. Over residues 118–141 the composition is skewed to low complexity; the sequence is QEAPAQAEPEAAAAPEPANEPAPA.

Belongs to the MinC family. Interacts with MinD and FtsZ.

In terms of biological role, cell division inhibitor that blocks the formation of polar Z ring septums. Rapidly oscillates between the poles of the cell to destabilize FtsZ filaments that have formed before they mature into polar Z rings. Prevents FtsZ polymerization. The polypeptide is Probable septum site-determining protein MinC (Marinobacter nauticus (strain ATCC 700491 / DSM 11845 / VT8) (Marinobacter aquaeolei)).